The sequence spans 385 residues: Protein pelota homolog (385 aa).

Residue Lys-162 forms a Glycyl lysine isopeptide (Lys-Gly) (interchain with G-Cter in SUMO2) linkage. Residues Ser-374, Ser-380, Ser-381, and Ser-382 each carry the phosphoserine modification.

This sequence belongs to the eukaryotic release factor 1 family. Pelota subfamily. In terms of assembly, component of the Pelota-HBS1L complex, also named Dom34-Hbs1 complex, composed of PELO and HBS1L. Interacts with PINK1. Interacts with ABCE1. Interacts with CNOT4. A divalent metal cation serves as cofactor.

It is found in the cytoplasm. Component of the Pelota-HBS1L complex, a complex that recognizes stalled ribosomes and triggers the No-Go Decay (NGD) pathway. In the Pelota-HBS1L complex, PELO recognizes ribosomes stalled at the 3' end of an mRNA and engages stalled ribosomes by destabilizing mRNA in the mRNA channel. Following mRNA extraction from stalled ribosomes by the SKI complex, the Pelota-HBS1L complex promotes recruitment of ABCE1, which drives the disassembly of stalled ribosomes, followed by degradation of damaged mRNAs as part of the NGD pathway. As part of the PINK1-regulated signaling, upon mitochondrial damage is recruited to the ribosome/mRNA-ribonucleoprotein complex associated to mitochondrial outer membrane thereby enabling the recruitment of autophagy receptors and induction of mitophagy. This is Protein pelota homolog (PELO) from Bos taurus (Bovine).